We begin with the raw amino-acid sequence, 147 residues long: uncharacterized protein (147 aa).

It to B.subtilis XkdM.

This is an uncharacterized protein from Bacillus subtilis (strain 168).